We begin with the raw amino-acid sequence, 663 residues long: DNA ligase (663 aa).

Residues 33–37, 82–83, and glutamate 112 contribute to the NAD(+) site; these read DYSYD and SI. Lysine 114 functions as the N6-AMP-lysine intermediate in the catalytic mechanism. NAD(+) is bound by residues arginine 135, glutamate 171, lysine 285, and lysine 309. Cysteine 403, cysteine 406, cysteine 419, and cysteine 424 together coordinate Zn(2+). The region spanning 581–663 is the BRCT domain; sequence DKEAPLQGKV…SRILDAKSVS (83 aa).

The protein belongs to the NAD-dependent DNA ligase family. LigA subfamily. Mg(2+) is required as a cofactor. Mn(2+) serves as cofactor.

The catalysed reaction is NAD(+) + (deoxyribonucleotide)n-3'-hydroxyl + 5'-phospho-(deoxyribonucleotide)m = (deoxyribonucleotide)n+m + AMP + beta-nicotinamide D-nucleotide.. Functionally, DNA ligase that catalyzes the formation of phosphodiester linkages between 5'-phosphoryl and 3'-hydroxyl groups in double-stranded DNA using NAD as a coenzyme and as the energy source for the reaction. It is essential for DNA replication and repair of damaged DNA. This Chlamydia trachomatis serovar L2 (strain ATCC VR-902B / DSM 19102 / 434/Bu) protein is DNA ligase.